Reading from the N-terminus, the 195-residue chain is Holliday junction branch migration complex subunit RuvA (195 aa).

The interval 1–66 (MNYLVFKVIY…LIIKDLYGFR (66 aa)) is domain I. The domain II stretch occupies residues 67–141 (TYNERLLFID…KYINKVSEKN (75 aa)). Position 141 (N141) is a region of interest, flexible linker. The segment at 141–195 (NPWAKELSIGLENLGYDKKDIEYAITKVKVDTQQNIDISEIIGCAIKEISLRHEN) is domain III.

Belongs to the RuvA family. As to quaternary structure, homotetramer. Forms an RuvA(8)-RuvB(12)-Holliday junction (HJ) complex. HJ DNA is sandwiched between 2 RuvA tetramers; dsDNA enters through RuvA and exits via RuvB. An RuvB hexamer assembles on each DNA strand where it exits the tetramer. Each RuvB hexamer is contacted by two RuvA subunits (via domain III) on 2 adjacent RuvB subunits; this complex drives branch migration. In the full resolvosome a probable DNA-RuvA(4)-RuvB(12)-RuvC(2) complex forms which resolves the HJ.

It localises to the cytoplasm. Its function is as follows. The RuvA-RuvB-RuvC complex processes Holliday junction (HJ) DNA during genetic recombination and DNA repair, while the RuvA-RuvB complex plays an important role in the rescue of blocked DNA replication forks via replication fork reversal (RFR). RuvA specifically binds to HJ cruciform DNA, conferring on it an open structure. The RuvB hexamer acts as an ATP-dependent pump, pulling dsDNA into and through the RuvAB complex. HJ branch migration allows RuvC to scan DNA until it finds its consensus sequence, where it cleaves and resolves the cruciform DNA. The chain is Holliday junction branch migration complex subunit RuvA from Ureaplasma urealyticum serovar 10 (strain ATCC 33699 / Western).